The following is a 118-amino-acid chain: Large ribosomal subunit protein uL24 (118 aa).

This sequence belongs to the universal ribosomal protein uL24 family. Part of the 50S ribosomal subunit.

Its function is as follows. One of two assembly initiator proteins, it binds directly to the 5'-end of the 23S rRNA, where it nucleates assembly of the 50S subunit. One of the proteins that surrounds the polypeptide exit tunnel on the outside of the subunit. The protein is Large ribosomal subunit protein uL24 of Prochlorococcus marinus (strain MIT 9515).